The sequence spans 331 residues: Phospho-N-acetylmuramoyl-pentapeptide-transferase (331 aa).

A run of 9 helical transmembrane segments spans residues 7–27 (IIYTIIIGFIITLILGPLTIP), 54–74 (TIGGIILIMSIIITSLTSGLI), 78–98 (LWIALAATVAFGIIGFIDDFI), 106–126 (LGLRAYQKLILQGTIAVILAI), 133–153 (IMGTEVIVPFVGEGITIAGFT), 154–174 (ITQTIDLGILYIPFIVFVVVA), 195–215 (IIAAFFALVAMSWGYVSLAIF), 249–269 (AIATIAVLMNVVLIIPIVGGI), and 311–331 (VVIVFWVVTVILCLVGMLALS).

The protein belongs to the glycosyltransferase 4 family. MraY subfamily. The cofactor is Mg(2+).

It is found in the cell membrane. It catalyses the reaction UDP-N-acetyl-alpha-D-muramoyl-L-alanyl-gamma-D-glutamyl-meso-2,6-diaminopimeloyl-D-alanyl-D-alanine + di-trans,octa-cis-undecaprenyl phosphate = di-trans,octa-cis-undecaprenyl diphospho-N-acetyl-alpha-D-muramoyl-L-alanyl-D-glutamyl-meso-2,6-diaminopimeloyl-D-alanyl-D-alanine + UMP. It functions in the pathway cell wall biogenesis; peptidoglycan biosynthesis. Its function is as follows. Catalyzes the initial step of the lipid cycle reactions in the biosynthesis of the cell wall peptidoglycan: transfers peptidoglycan precursor phospho-MurNAc-pentapeptide from UDP-MurNAc-pentapeptide onto the lipid carrier undecaprenyl phosphate, yielding undecaprenyl-pyrophosphoryl-MurNAc-pentapeptide, known as lipid I. The sequence is that of Phospho-N-acetylmuramoyl-pentapeptide-transferase from Alkaliphilus metalliredigens (strain QYMF).